The primary structure comprises 333 residues: ADP-L-glycero-D-manno-heptose-6-epimerase (333 aa).

Residues 11–12 (FI), 32–33 (DN), lysine 39, lysine 54, 76–80 (QGACS), and asparagine 93 each bind NADP(+). Tyrosine 140 serves as the catalytic Proton acceptor. Lysine 144 is a binding site for NADP(+). Asparagine 170 is a substrate binding site. The NADP(+) site is built by valine 171 and lysine 179. Lysine 179 acts as the Proton acceptor in catalysis. Residues arginine 181, histidine 188, 202–205 (FGGW), arginine 215, and tyrosine 294 contribute to the substrate site.

Belongs to the NAD(P)-dependent epimerase/dehydratase family. HldD subfamily. Homopentamer. Requires NADP(+) as cofactor.

The enzyme catalyses ADP-D-glycero-beta-D-manno-heptose = ADP-L-glycero-beta-D-manno-heptose. The protein operates within nucleotide-sugar biosynthesis; ADP-L-glycero-beta-D-manno-heptose biosynthesis; ADP-L-glycero-beta-D-manno-heptose from D-glycero-beta-D-manno-heptose 7-phosphate: step 4/4. It functions in the pathway bacterial outer membrane biogenesis; LPS core biosynthesis. In terms of biological role, catalyzes the interconversion between ADP-D-glycero-beta-D-manno-heptose and ADP-L-glycero-beta-D-manno-heptose via an epimerization at carbon 6 of the heptose. The chain is ADP-L-glycero-D-manno-heptose-6-epimerase from Chromobacterium violaceum (strain ATCC 12472 / DSM 30191 / JCM 1249 / CCUG 213 / NBRC 12614 / NCIMB 9131 / NCTC 9757 / MK).